Reading from the N-terminus, the 1038-residue chain is Isoleucine--tRNA ligase (1038 aa).

Positions 48-58 match the 'HIGH' region motif; the sequence is PTANGKPHVGH. The short motif at 590–594 is the 'KMSKS' region element; sequence KMSKS. Lys593 is an ATP binding site.

The protein belongs to the class-I aminoacyl-tRNA synthetase family. IleS type 2 subfamily. Monomer. Requires Zn(2+) as cofactor.

The protein localises to the cytoplasm. The catalysed reaction is tRNA(Ile) + L-isoleucine + ATP = L-isoleucyl-tRNA(Ile) + AMP + diphosphate. Catalyzes the attachment of isoleucine to tRNA(Ile). As IleRS can inadvertently accommodate and process structurally similar amino acids such as valine, to avoid such errors it has two additional distinct tRNA(Ile)-dependent editing activities. One activity is designated as 'pretransfer' editing and involves the hydrolysis of activated Val-AMP. The other activity is designated 'posttransfer' editing and involves deacylation of mischarged Val-tRNA(Ile). This is Isoleucine--tRNA ligase from Clostridium novyi (strain NT).